The primary structure comprises 359 residues: Phospho-N-acetylmuramoyl-pentapeptide-transferase (359 aa).

10 helical membrane passes run 27–47, 73–93, 94–114, 134–154, 166–186, 197–217, 233–253, 261–281, 286–306, and 336–356; these read IYALLTALVITIVLGPMMMRW, TMGGLLLGFGVLVSTLLWADL, TNIYVWLTMLVFAGFGLVGFV, LLGQLLVAGTAVGLLIMQPAY, FTPDLGWMYLPFALLVMIGAS, GLAIGPSITSATCYAFFIYIA, GVGEVTVFCGALVGAGLGFLW, LFMGDVGSLSIGGVLGFIAVL, LLLIIVGGVFVFETISVIMQV, and KIVIRFWVISILMALMALSTL.

The protein belongs to the glycosyltransferase 4 family. MraY subfamily. It depends on Mg(2+) as a cofactor.

The protein localises to the cell inner membrane. It carries out the reaction UDP-N-acetyl-alpha-D-muramoyl-L-alanyl-gamma-D-glutamyl-meso-2,6-diaminopimeloyl-D-alanyl-D-alanine + di-trans,octa-cis-undecaprenyl phosphate = di-trans,octa-cis-undecaprenyl diphospho-N-acetyl-alpha-D-muramoyl-L-alanyl-D-glutamyl-meso-2,6-diaminopimeloyl-D-alanyl-D-alanine + UMP. The protein operates within cell wall biogenesis; peptidoglycan biosynthesis. Catalyzes the initial step of the lipid cycle reactions in the biosynthesis of the cell wall peptidoglycan: transfers peptidoglycan precursor phospho-MurNAc-pentapeptide from UDP-MurNAc-pentapeptide onto the lipid carrier undecaprenyl phosphate, yielding undecaprenyl-pyrophosphoryl-MurNAc-pentapeptide, known as lipid I. In Maridesulfovibrio salexigens (strain ATCC 14822 / DSM 2638 / NCIMB 8403 / VKM B-1763) (Desulfovibrio salexigens), this protein is Phospho-N-acetylmuramoyl-pentapeptide-transferase.